The chain runs to 356 residues: UDP-N-acetylglucosamine--N-acetylmuramyl-(pentapeptide) pyrophosphoryl-undecaprenol N-acetylglucosamine transferase (356 aa).

Residues 11–13 (TGG), N123, R159, S187, I241, 260–265 (ALTVAE), and Q286 each bind UDP-N-acetyl-alpha-D-glucosamine.

Belongs to the glycosyltransferase 28 family. MurG subfamily.

The protein localises to the cell inner membrane. It catalyses the reaction di-trans,octa-cis-undecaprenyl diphospho-N-acetyl-alpha-D-muramoyl-L-alanyl-D-glutamyl-meso-2,6-diaminopimeloyl-D-alanyl-D-alanine + UDP-N-acetyl-alpha-D-glucosamine = di-trans,octa-cis-undecaprenyl diphospho-[N-acetyl-alpha-D-glucosaminyl-(1-&gt;4)]-N-acetyl-alpha-D-muramoyl-L-alanyl-D-glutamyl-meso-2,6-diaminopimeloyl-D-alanyl-D-alanine + UDP + H(+). It participates in cell wall biogenesis; peptidoglycan biosynthesis. Functionally, cell wall formation. Catalyzes the transfer of a GlcNAc subunit on undecaprenyl-pyrophosphoryl-MurNAc-pentapeptide (lipid intermediate I) to form undecaprenyl-pyrophosphoryl-MurNAc-(pentapeptide)GlcNAc (lipid intermediate II). This Azoarcus sp. (strain BH72) protein is UDP-N-acetylglucosamine--N-acetylmuramyl-(pentapeptide) pyrophosphoryl-undecaprenol N-acetylglucosamine transferase.